We begin with the raw amino-acid sequence, 89 residues long: UPF0335 protein Caul_0876 (89 aa).

This sequence belongs to the UPF0335 family.

The chain is UPF0335 protein Caul_0876 from Caulobacter sp. (strain K31).